Reading from the N-terminus, the 274-residue chain is Orotidine 5'-phosphate decarboxylase (274 aa).

Lys95 functions as the Proton donor in the catalytic mechanism.

It belongs to the OMP decarboxylase family. Type 2 subfamily.

It catalyses the reaction orotidine 5'-phosphate + H(+) = UMP + CO2. It participates in pyrimidine metabolism; UMP biosynthesis via de novo pathway; UMP from orotate: step 2/2. This is Orotidine 5'-phosphate decarboxylase (pyrF) from Mycobacterium bovis (strain ATCC BAA-935 / AF2122/97).